Reading from the N-terminus, the 512-residue chain is SNF1-related protein kinase catalytic subunit alpha KIN10 (512 aa).

Residues 19 to 271 (YKLGRTLGIG…IPEIRQHPWF (253 aa)) enclose the Protein kinase domain. Lysine 20 is covalently cross-linked (Glycyl lysine isopeptide (Lys-Gly) (interchain with G-Cter in ubiquitin)). 25–33 (LGIGSFGRV) contacts ATP. Lysine 34 is covalently cross-linked (Glycyl lysine isopeptide (Lys-Gly) (interchain with G-Cter in SUMO)). Lysine 48 is an ATP binding site. Residue lysine 63 forms a Glycyl lysine isopeptide (Lys-Gly) (interchain with G-Cter in SUMO) linkage. The Proton acceptor role is filled by aspartate 142. Serine 164 is subject to Phosphoserine. The residue at position 175 (threonine 175) is a Phosphothreonine; by GRIK1 or GRIK2. The interval 290-389 (AKKIDEEILQ…GLRSQYPVER (100 aa)) is auto-inhibitory domain (AID). The UBA domain maps to 292-332 (KIDEEILQEVINMGFDRNHLIESLRNRTQNDGTVTYYLILD). The tract at residues 294–512 (DEEILQEVIN…AAFLAQLRVL (219 aa)) is regulatory domain (RD). Phosphoserine is present on serine 364. A Glycyl lysine isopeptide (Lys-Gly) (interchain with G-Cter in SUMO) cross-link involves residue lysine 390. The interval 390 to 512 (KWALGLQSRA…AAFLAQLRVL (123 aa)) is PPI. In terms of domain architecture, KA1 spans 463 to 511 (AVKSPNVVKFEIQLYKTRDDKYLLDLQRVQGPQFLFLDLCAAFLAQLRV).

The protein belongs to the protein kinase superfamily. CAMK Ser/Thr protein kinase family. SNF1 subfamily. As to quaternary structure, subunit of a probable heterotrimeric complex consisting of an alpha catalytic (KIN10 or KIN11) subunit, and a beta (KINB) and a gamma (KING or SNF4) non-catalytic regulatory subunits. Interacts with KINB2, KINB3, SNF4 and probably with KINB1 and KING1. Interacts with SKP1/ASK1, PAD1, the N-terminus of PRL1 and the WD40 domain of 5PTase13. Potential subunit of a SCF ubiquitin ligase complex consisting of a SNF1-related protein kinase, SKP1 and CUL1. The association of the SCF complex with the proteasome may be mediated by PAD1 and seems to be inhibited by the interaction with PRL1. Interacts with ATAF1. Interacts with ESD4. Interacts with SCE1. Interacts with FUS3. Interacts with PP2C74. Interacts with CDKE1. Interacts with ABI1 and PP2CA. Interacts with KRP6. Interacts with CIPK14. Interacts with FLZ proteins through their FLZ-type zinc finger domains. Interacts with GEBP/STKR1. Interacts with MYC2. Interacts with IDD8. Interacts with BZIP63. Interacts with PTL. Interacts with FLZ3, FLZ9, TCP3, TCP13, HB21/ZHD3 and HB23/ZHD10. Interacts with PTP1. Interacts with RAPTOR1B. Forms oligomers in vitro under strongly reducing conditions. Interacts with WRI1. Interacts with EIN3. Component of a ternary complex composed of BZIP2-BZIP63 heterodimer and KIN10. Interacts with IPK2b. Interacts with FLZ6 and FLZ10. In terms of processing, phosphorylated at Thr-175 in response to glucose. Phosphorylated at Thr-175 under submergence. Autophosphorylated. Dephosphorylated at Thr-175 by ABI1 and PP2CA. Ubiquitinated. Degradation is mediated by a CUL4-based E3 ligase that uses PRL1 as a substrate receptor. Post-translationally, sumoylated by SIZ1. Sumoylated SnRK1 is ubiquitinated and degraded by the proteasome. Isoform 2 is widely expressed, especially in newly developing tissues. Isoform 2 is expressed throughout the seedling, with highest expression in leaf primordia and vascular tissue, and the seedling root tip. Isoform 2 is later expressed in developing lateral root primordia and developing embryos within siliques. Isoform 1 is widely expressed but at very low levels.

The protein resides in the plastid. Its subcellular location is the chloroplast. It localises to the cytoplasm. The protein localises to the nucleus. It is found in the golgi apparatus. The protein resides in the endoplasmic reticulum. It catalyses the reaction L-seryl-[protein] + ATP = O-phospho-L-seryl-[protein] + ADP + H(+). The enzyme catalyses L-threonyl-[protein] + ATP = O-phospho-L-threonyl-[protein] + ADP + H(+). With respect to regulation, activated by phosphorylation at Thr-175 by GRIK1/SNAK2 and GRIK2/SNAK1. Inactivated by dephosphorylation at Thr-175. Inhibited by trehalose-6-phosphate. Down-regulated by SR45 by affecting its stability. Reduced kinase activity in response to H(2)O(2) treatment. The redox-state of Cys-177 seems to directly influence its kinase activity. Down-regulated by FLZ6 and FLZ10. Catalytic subunit of the probable trimeric SNF1-related protein kinase (SnRK) complex, a central regulator of cellular energy homeostasis, which, in response to seemingly unrelated darkness, sugar and stress conditions, activates energy-producing pathways and inhibits energy-consuming processes. May play a role in a signal transduction cascade regulating gene expression and carbohydrate metabolism in higher plants. The SnRK complex may also be involved in the regulation of fatty acid synthesis by phosphorylation of acetyl-CoA carboxylase and in assimilation of nitrogen by phosphorylating nitrate reductase. In vitro, KIN10 exhibits kinase activity on sucrose phosphate synthase and the kinase activity is inhibited by PRL1. May be a subunit of a SCF ubiquitin ligase complex and thus be involved in proteasomal ubiquitination. Phosphorylates GRIK1/SNAK2 and GRIK2/SNAK1 in vitro. Cooperates with FUS3 to regulate developmental phase transitions and lateral organ development and act both as positive regulators of abscisic acid (ABA) signaling during germination. Phosphorylates FUS3 in embryo. Negatively modulates MYC2 accumulation through its protein phosphorylation. Phosphorylates geminivirus (CaLCuV, TGMV, ToMoV) AL2 protein resulting in a delay in the viral DNA accumulation and symptom appearance during infection. Regulates bZIP63 activity to alter metabolism in response to starvation through its protein phosphorylation. Under sugar deprivation conditions, antagonizes the IDD8 function in flowering time control by its protein phosphorylation. Plays a cardinal role in the control of cell proliferation through inhibition of KRP6 activity by its protein phosphorylation. Under submergence, phosphorylates PTP1, leading to the release of the MPK6 signaling pathway inhibition. Triggers its own SUMO-mediated proteasomal degradation, establishing a negative feedback loop that attenuates SnRK1 signaling and prevents detrimental hyperactivation of stress responses. Phosphorylates RAPTOR1B in vitro. Phosphorylates and down-regulates HMGR1S in vitro. Kinase activity is redox-sensitive. Acts upstream of TOR in the regulation of autophagy. Required for the activation of autophagy by many abiotic stresses. Involved in positive regulation of autophagy, possibly by affecting the phosphorylation of ATG1 proteins. Negatively modulates WRI1 accumulation through its protein phosphorylation. Modulates leaf senescence progression by the negative regulation of EIN3 accumulation through its protein phosphorylation. Under extended darkness, C/S1-bZIP-SnRK1 complex interacts with the histone acetylation machinery to remodel chromatin and facilitate transcription. BZIP2-BZIP63-KIN10 complex binds to the ETFQO promoter to up-regulate its transcription. Phosphorylates and down-regulates IPK2b in vitro. Involved in the regulation of sucrose-induced hypocotyl elongation under light/dark cycles. This chain is SNF1-related protein kinase catalytic subunit alpha KIN10, found in Arabidopsis thaliana (Mouse-ear cress).